Here is a 588-residue protein sequence, read N- to C-terminus: Aspartate--tRNA ligase (588 aa).

Glutamate 174 contributes to the L-aspartate binding site. The aspartate stretch occupies residues 198–201 (QLFK). Arginine 220 is a binding site for L-aspartate. Residues 220–222 (RDE) and glutamine 229 contribute to the ATP site. Histidine 448 is a binding site for L-aspartate. An ATP-binding site is contributed by glutamate 482. Arginine 489 is a binding site for L-aspartate. 534-537 (GIDR) serves as a coordination point for ATP.

It belongs to the class-II aminoacyl-tRNA synthetase family. Type 1 subfamily. Homodimer.

It is found in the cytoplasm. It catalyses the reaction tRNA(Asp) + L-aspartate + ATP = L-aspartyl-tRNA(Asp) + AMP + diphosphate. In terms of biological role, catalyzes the attachment of L-aspartate to tRNA(Asp) in a two-step reaction: L-aspartate is first activated by ATP to form Asp-AMP and then transferred to the acceptor end of tRNA(Asp). The protein is Aspartate--tRNA ligase of Xanthomonas oryzae pv. oryzae (strain PXO99A).